A 79-amino-acid polypeptide reads, in one-letter code: Ubiquinol-cytochrome c reductase complex assembly factor 5 (79 aa).

Topologically, residues 1 to 20 (MSPYSGSVRRLLDSWPGKKR) are mitochondrial matrix. Residues 21-43 (FGVYRFLPLFFLLGAGLEFSMIN) traverse the membrane as a helical segment. Over 44-79 (WTVGETNFYRTFKRRQAKNYVEEQQHLQARAANNTN) the chain is Mitochondrial intermembrane.

This sequence belongs to the UQCC5 family. Interacts with respiratory complex III components Uqcc1 and RFeSP; the interactions are probably involved in the assembly and stability of the mitochondrial ubiquinol-cytochrome c reductase complex. Interacts with sloth2; the interaction stabilizes both components. Expressed in the brain.

Its subcellular location is the mitochondrion inner membrane. It is found in the mitochondrion. Its function is as follows. Required for the assembly and stability of the mitochondrial ubiquinol-cytochrome c reductase complex (complex III (CIII) or cytochrome b-c1 complex), a multisubunit transmembrane complex that is part of the mitochondrial electron transport chain (ETC) which drives oxidative phosphorylation. The sequence is that of Ubiquinol-cytochrome c reductase complex assembly factor 5 from Drosophila melanogaster (Fruit fly).